A 446-amino-acid chain; its full sequence is Chromosomal replication initiator protein DnaA (446 aa).

The tract at residues 1-73 (MAAQLNELWQ…INSMKIITTK (73 aa)) is domain I, interacts with DnaA modulators. Residues 73-107 (KKYDIAFLISSEEALETDEDQETDTNNVNTDTSSS) form a domain II region. Residues 108–324 (MLNPKYKFDS…GALIRIVAFS (217 aa)) are domain III, AAA+ region. Residues G152, G154, K155, and T156 each contribute to the ATP site. Positions 325–446 (SLTNKEISVD…NEITKRFSPK (122 aa)) are domain IV, binds dsDNA.

Belongs to the DnaA family. In terms of assembly, oligomerizes as a right-handed, spiral filament on DNA at oriC.

It is found in the cytoplasm. Functionally, plays an essential role in the initiation and regulation of chromosomal replication. ATP-DnaA binds to the origin of replication (oriC) to initiate formation of the DNA replication initiation complex once per cell cycle. Binds the DnaA box (a 9 base pair repeat at the origin) and separates the double-stranded (ds)DNA. Forms a right-handed helical filament on oriC DNA; dsDNA binds to the exterior of the filament while single-stranded (ss)DNA is stabiized in the filament's interior. The ATP-DnaA-oriC complex binds and stabilizes one strand of the AT-rich DNA unwinding element (DUE), permitting loading of DNA polymerase. After initiation quickly degrades to an ADP-DnaA complex that is not apt for DNA replication. Binds acidic phospholipids. The polypeptide is Chromosomal replication initiator protein DnaA (Clostridium acetobutylicum (strain ATCC 824 / DSM 792 / JCM 1419 / IAM 19013 / LMG 5710 / NBRC 13948 / NRRL B-527 / VKM B-1787 / 2291 / W)).